Here is a 220-residue protein sequence, read N- to C-terminus: NADH-quinone oxidoreductase subunit I (220 aa).

2 4Fe-4S ferredoxin-type domains span residues 71-102 (LQRLLDSGSERCIGCGLCEKICTSNCIRIITH) and 112-141 (DSYTINLGRCIYCGLCAEVCPELAIVMGNR). Residues cysteine 82, cysteine 85, cysteine 88, cysteine 92, cysteine 121, cysteine 124, cysteine 127, and cysteine 131 each contribute to the [4Fe-4S] cluster site. A disordered region spans residues 187–220 (MQATPLDYVQEPSKEESKEETPTNPESNKGDENV). Over residues 198–207 (PSKEESKEET) the composition is skewed to basic and acidic residues.

The protein belongs to the complex I 23 kDa subunit family. In terms of assembly, NDH-1 is composed of 14 different subunits. Subunits NuoA, H, J, K, L, M, N constitute the membrane sector of the complex. [4Fe-4S] cluster is required as a cofactor.

Its subcellular location is the cell inner membrane. The catalysed reaction is a quinone + NADH + 5 H(+)(in) = a quinol + NAD(+) + 4 H(+)(out). Functionally, NDH-1 shuttles electrons from NADH, via FMN and iron-sulfur (Fe-S) centers, to quinones in the respiratory chain. The immediate electron acceptor for the enzyme in this species is believed to be ubiquinone. Couples the redox reaction to proton translocation (for every two electrons transferred, four hydrogen ions are translocated across the cytoplasmic membrane), and thus conserves the redox energy in a proton gradient. The polypeptide is NADH-quinone oxidoreductase subunit I (Helicobacter pylori (strain HPAG1)).